A 477-amino-acid polypeptide reads, in one-letter code: UDP-N-acetylmuramate--L-alanine ligase (477 aa).

118–124 contributes to the ATP binding site; the sequence is GTHGKTS.

It belongs to the MurCDEF family.

It is found in the cytoplasm. It catalyses the reaction UDP-N-acetyl-alpha-D-muramate + L-alanine + ATP = UDP-N-acetyl-alpha-D-muramoyl-L-alanine + ADP + phosphate + H(+). The protein operates within cell wall biogenesis; peptidoglycan biosynthesis. Cell wall formation. This chain is UDP-N-acetylmuramate--L-alanine ligase, found in Corynebacterium diphtheriae (strain ATCC 700971 / NCTC 13129 / Biotype gravis).